The primary structure comprises 744 residues: Adenosylcobalamin-dependent ribonucleoside-triphosphate reductase (744 aa).

A disulfide bridge links Cys120 with Cys424. Positions 148 to 159 are effector region-1; it reads SMPFSFLFDQLM. Positions 169–318 are effector region-2; the sequence is VDDNINQIPQ…ICNLIGKTVV (150 aa). Residues Cys413 and Glu415 contribute to the active site. Positions 570–631 are adenosylcobalamin-binding-1; sequence FHYAGYLIQR…SKNFASAGTV (62 aa). Positions 690–729 are adenosylcobalamin-binding-2; sequence LKQAPKEPINKKAYEDRVAMITGDVKEVFENQNKDQKGLE.

The protein belongs to the class II ribonucleoside-triphosphate reductase family. As to quaternary structure, monomer. The cofactor is adenosylcob(III)alamin.

It catalyses the reaction a 2'-deoxyribonucleoside 5'-triphosphate + [thioredoxin]-disulfide + H2O = a ribonucleoside 5'-triphosphate + [thioredoxin]-dithiol. Its activity is regulated as follows. Allosterically regulated by ATP and dNTP. The chain is Adenosylcobalamin-dependent ribonucleoside-triphosphate reductase (rtpR) from Lactobacillus helveticus (strain DPC 4571).